We begin with the raw amino-acid sequence, 682 residues long: Heat shock 70 kDa protein 10, mitochondrial (682 aa).

A mitochondrion-targeting transit peptide spans 1-50; that stretch reads MATAALLRSIRRREVVSSPFSAYRCLSSSGKASLNSSYLGQNFRSFSRAF. Residues 646 to 682 are disordered; it reads KIGEHMSGGSGGGSAPGGGSEGGSDQAPEAEYEEVKK. Gly residues predominate over residues 651–667; it reads MSGGSGGGSAPGGGSEG. A compositionally biased stretch (acidic residues) spans 673–682; that stretch reads PEAEYEEVKK.

The protein belongs to the heat shock protein 70 (TC 1.A.33) family. DnaK subfamily.

It localises to the mitochondrion. In terms of biological role, chaperone involved in the maturation of iron-sulfur [Fe-S] cluster-containing proteins. Has a low intrinsic ATPase activity which is markedly stimulated by HSCB and ISU1. In cooperation with other chaperones, Hsp70s are key components that facilitate folding of de novo synthesized proteins, assist translocation of precursor proteins into organelles, and are responsible for degradation of damaged protein under stress conditions. In Arabidopsis thaliana (Mouse-ear cress), this protein is Heat shock 70 kDa protein 10, mitochondrial.